Here is a 387-residue protein sequence, read N- to C-terminus: Eukaryotic translation initiation factor 3 subunit M (387 aa).

The PCI domain occupies 181–340 (LSSKVMIELL…RKVHISSTMH (160 aa)).

Belongs to the eIF-3 subunit M family. Component of the eukaryotic translation initiation factor 3 (eIF-3) complex. The eIF-3 complex interacts with pix.

Its subcellular location is the cytoplasm. The protein localises to the golgi apparatus. Its function is as follows. Component of the eukaryotic translation initiation factor 3 (eIF-3) complex, which is involved in protein synthesis of a specialized repertoire of mRNAs and, together with other initiation factors, stimulates binding of mRNA and methionyl-tRNAi to the 40S ribosome. The eIF-3 complex specifically targets and initiates translation of a subset of mRNAs involved in cell proliferation. This chain is Eukaryotic translation initiation factor 3 subunit M, found in Drosophila grimshawi (Hawaiian fruit fly).